The chain runs to 114 residues: rRNA-processing protein cgrA (114 aa).

Positions 1–13 (MSSAAPAPSTHAA) are enriched in low complexity. Disordered regions lie at residues 1-47 (MSSA…AARK) and 77-114 (RRAAKEEKERYEKMAEKMHRKRVERLKKREKRNKLLNS). A coiled-coil region spans residues 40 to 101 (TKRAAARKEQ…EKMHRKRVER (62 aa)). A compositionally biased stretch (basic and acidic residues) spans 77–93 (RRAAKEEKERYEKMAEK). Over residues 94–114 (MHRKRVERLKKREKRNKLLNS) the composition is skewed to basic residues.

The protein belongs to the CGR1 family.

The protein resides in the nucleus. The protein localises to the nucleolus. Involved in nucleolar integrity and required for processing of the pre-rRNA for the 60S ribosome subunit. The chain is rRNA-processing protein cgrA (cgrA) from Emericella nidulans (strain FGSC A4 / ATCC 38163 / CBS 112.46 / NRRL 194 / M139) (Aspergillus nidulans).